We begin with the raw amino-acid sequence, 143 residues long: Dehydrin DHN2 (143 aa).

The segment covering 1 to 10 (MEYQGQTGHA) has biased composition (polar residues). The interval 1–143 (MEYQGQTGHA…IKEKLPGGQH (143 aa)) is disordered. The segment covering 24-34 (GHGGATGGPTG) has biased composition (gly residues). Residues 35–46 (THGAAAAAAGTG) show a composition bias toward low complexity. The span at 51–61 (TRDDHKTDGVL) shows a compositional bias: basic and acidic residues. Low complexity predominate over residues 62–71 (RRSGSSSSSS). Over residues 86–101 (KEKIKEKLPGGAHKDA) the composition is skewed to basic and acidic residues. Residues 109–123 (AAGEYAGTGTHGAEA) are compositionally biased toward low complexity. Residues 124–143 (TGEKKGVMDKIKEKLPGGQH) show a composition bias toward basic and acidic residues.

The protein belongs to the plant dehydrin family.

This chain is Dehydrin DHN2 (DHN2), found in Hordeum vulgare (Barley).